The primary structure comprises 233 residues: Small ribosomal subunit protein uS3 (233 aa).

One can recognise a KH type-2 domain in the interval 39–107; it reads VRQFLTKELS…PAQINTYEIR (69 aa).

The protein belongs to the universal ribosomal protein uS3 family. As to quaternary structure, part of the 30S ribosomal subunit. Forms a tight complex with proteins S10 and S14.

In terms of biological role, binds the lower part of the 30S subunit head. Binds mRNA in the 70S ribosome, positioning it for translation. The chain is Small ribosomal subunit protein uS3 from Hamiltonella defensa subsp. Acyrthosiphon pisum (strain 5AT).